The primary structure comprises 103 residues: UPF0145 protein BC_5181 (103 aa).

Belongs to the UPF0145 family.

This is UPF0145 protein BC_5181 from Bacillus cereus (strain ATCC 14579 / DSM 31 / CCUG 7414 / JCM 2152 / NBRC 15305 / NCIMB 9373 / NCTC 2599 / NRRL B-3711).